The chain runs to 180 residues: Large ribosomal subunit protein uL5 (180 aa).

This sequence belongs to the universal ribosomal protein uL5 family. In terms of assembly, part of the 50S ribosomal subunit; part of the 5S rRNA/L5/L18/L25 subcomplex. Contacts the 5S rRNA and the P site tRNA. Forms a bridge to the 30S subunit in the 70S ribosome.

In terms of biological role, this is one of the proteins that bind and probably mediate the attachment of the 5S RNA into the large ribosomal subunit, where it forms part of the central protuberance. In the 70S ribosome it contacts protein S13 of the 30S subunit (bridge B1b), connecting the 2 subunits; this bridge is implicated in subunit movement. Contacts the P site tRNA; the 5S rRNA and some of its associated proteins might help stabilize positioning of ribosome-bound tRNAs. The chain is Large ribosomal subunit protein uL5 from Moorella thermoacetica (strain ATCC 39073 / JCM 9320).